The chain runs to 275 residues: 4-hydroxy-tetrahydrodipicolinate reductase (275 aa).

NAD(+) contacts are provided by residues 13–18 (GAAGKM) and 108–110 (GTT). His-164 acts as the Proton donor/acceptor in catalysis. A (S)-2,3,4,5-tetrahydrodipicolinate-binding site is contributed by His-165. The active-site Proton donor is the Lys-168. (S)-2,3,4,5-tetrahydrodipicolinate is bound at residue 174–175 (GT).

It belongs to the DapB family.

Its subcellular location is the cytoplasm. The enzyme catalyses (S)-2,3,4,5-tetrahydrodipicolinate + NAD(+) + H2O = (2S,4S)-4-hydroxy-2,3,4,5-tetrahydrodipicolinate + NADH + H(+). It catalyses the reaction (S)-2,3,4,5-tetrahydrodipicolinate + NADP(+) + H2O = (2S,4S)-4-hydroxy-2,3,4,5-tetrahydrodipicolinate + NADPH + H(+). It functions in the pathway amino-acid biosynthesis; L-lysine biosynthesis via DAP pathway; (S)-tetrahydrodipicolinate from L-aspartate: step 4/4. Catalyzes the conversion of 4-hydroxy-tetrahydrodipicolinate (HTPA) to tetrahydrodipicolinate. The sequence is that of 4-hydroxy-tetrahydrodipicolinate reductase from Rippkaea orientalis (strain PCC 8801 / RF-1) (Cyanothece sp. (strain PCC 8801)).